Consider the following 354-residue polypeptide: MNELKNDRYLRALLRQPVDVTPVWMMRQAGRYLPEYKATRAQAGDFMSLCKNAELACEVTLQPLRRFPLDAAILFSDILTIPDAMGLGLYFETGEGPRFSSPITSRADVDKLPAFDPEVELGYVMNAVRTIRRELKGEVPLIGFSGSPWTLATYMVEGGSSKAFTKLKKMMYAEPATLHLLLDKLADSVILYLNAQIKAGAQSVMVFDTWGGVLTGRDYREFSLHYMHKIVDGLLRENDGRRVPVTLFTKGGGQWLEAMAATGCDALGLDWTTDIADARRRVGDKVALQGNMDPSMLYASPERIGQEVETILAGFGHGEGHVFNLGHGIHPDVPPENAGAFVEAVHAQSGKYHR.

Substrate contacts are provided by residues 27–31 (RQAGR), aspartate 77, tyrosine 154, threonine 209, and histidine 327.

The protein belongs to the uroporphyrinogen decarboxylase family. As to quaternary structure, homodimer.

It localises to the cytoplasm. The catalysed reaction is uroporphyrinogen III + 4 H(+) = coproporphyrinogen III + 4 CO2. It functions in the pathway porphyrin-containing compound metabolism; protoporphyrin-IX biosynthesis; coproporphyrinogen-III from 5-aminolevulinate: step 4/4. Catalyzes the decarboxylation of four acetate groups of uroporphyrinogen-III to yield coproporphyrinogen-III. The polypeptide is Uroporphyrinogen decarboxylase (Serratia proteamaculans (strain 568)).